We begin with the raw amino-acid sequence, 727 residues long: MQIRLKPDYSFFIASSSTMASTSSLGPSTLLSYGSPSRQFPDFGFRLISGHESVRIPSFRRFRVHCESKEKEVKPSSPFLESSSFSGDAALRSSEWKAVPDIWRSSAEKYGDRVALVDPYHDPPLKLTYKQLEQEILDFAEGLRVLGVKADEKIALFADNSCRWLVSDQGIMATGAVNVVRGSRSSVEELLQIYRHSESVAIVVDNPEFFNRIAESFTSKASLRFLILLWGEKSSLVTQGMQIPVYSYAEIINQGQESRAKLSASNDTRSYRNQFIDSDDTAAIMYTSGTTGNPKGVMLTHRNLLHQIKHLSKYVPAQAGDKFLSMLPSWHAYERASEYFIFTCGVEQMYTSIRYLKDDLKRYQPNYIVSVPLVYETLYSGIQKQISASSAGRKFLALTLIKVSMAYMEMKRIYEGMCLTKEQKPPMYIVAFVDWLWARVIAALLWPLHMLAKKLIYKKIHSSIGISKAGISGGGSLPIHVDKFFEAIGVILQNGYGLTETSPVVCARTLSCNVLGSAGHPMHGTEFKIVDPETNNVLPPGSKGIIKVRGPQVMKGYYKNPSTTKQVLNESGWFNTGDTGWIAPHHSKGRSRHCGGVIVLEGRAKDTIVLSTGENVEPLEIEEAAMRSRVIEQIVVIGQDRRRLGAIIIPNKEEAQRVDPETSKETLKSLVYQELRKWTSECSFQVGPVLIVDDPFTIDNGLMTPTMKIRRDMVVAKYKEEIDQLYS.

Residues 1–66 (MQIRLKPDYS…PSFRRFRVHC (66 aa)) constitute a chloroplast transit peptide.

Belongs to the ATP-dependent AMP-binding enzyme family.

The protein resides in the plastid. The protein localises to the chloroplast. It carries out the reaction a long-chain fatty acid + holo-[ACP] + ATP = a long-chain fatty acyl-[ACP] + AMP + diphosphate. Its function is as follows. Probably involved in the activation of fatty acids to acyl-carrier-protein prior to fatty acid elongation in plastids. Acts on medium- to long-chain fatty acids. This chain is Long-chain-fatty-acid--[acyl-carrier-protein] ligase AEE15, chloroplastic (AAE15), found in Arabidopsis thaliana (Mouse-ear cress).